Here is a 657-residue protein sequence, read N- to C-terminus: Probable alpha-galactosidase D (657 aa).

Residues 1–16 (MLPKIFYLSLLPAALG) form the signal peptide. 2 N-linked (GlcNAc...) asparagine glycosylation sites follow: Asn47 and Asn91. Cys124 and Cys157 form a disulfide bridge. Asp155 functions as the Nucleophile in the catalytic mechanism. 2 N-linked (GlcNAc...) asparagine glycosylation sites follow: Asn182 and Asn191. Residue 200-204 (EWGID) coordinates substrate. Asp222 functions as the Proton donor in the catalytic mechanism. 7 N-linked (GlcNAc...) asparagine glycosylation sites follow: Asn291, Asn438, Asn460, Asn505, Asn539, Asn543, and Asn582.

It belongs to the glycosyl hydrolase 27 family.

It localises to the secreted. The enzyme catalyses Hydrolysis of terminal, non-reducing alpha-D-galactose residues in alpha-D-galactosides, including galactose oligosaccharides, galactomannans and galactolipids.. Its function is as follows. Hydrolyzes a variety of simple alpha-D-galactoside as well as more complex molecules such as oligosaccharides and polysaccharides. This Aspergillus oryzae (strain ATCC 42149 / RIB 40) (Yellow koji mold) protein is Probable alpha-galactosidase D (aglD).